The chain runs to 184 residues: UPF0301 protein ABSDF3201 (184 aa).

This sequence belongs to the UPF0301 (AlgH) family.

The chain is UPF0301 protein ABSDF3201 from Acinetobacter baumannii (strain SDF).